Reading from the N-terminus, the 554-residue chain is Alpha-taxilin (554 aa).

Residues 1 to 66 (MKNQDKKNGP…ARAKAAQPGA (66 aa)) form a disordered region. Serine 71 is subject to Phosphoserine. Residues 85 to 166 (YCVDNNQGGP…RRPQEKKKAK (82 aa)) are disordered. Over residues 91 to 103 (QGGPAEEGAQGEP) the composition is skewed to low complexity. Positions 143–158 (EEIRASDEVGDRDHRR) are enriched in basic and acidic residues. A coiled-coil region spans residues 186 to 491 (EEKLAALCKK…NKRVQDLTAG (306 aa)). The segment at 492 to 554 (GITDIGSERR…GPGEPTPATA (63 aa)) is disordered. Serine 515 and serine 523 each carry phosphoserine.

This sequence belongs to the taxilin family. In terms of assembly, binds to the C-terminal coiled coil region of syntaxin family members STX1A, STX3A and STX4A, but not when these proteins are complexed with SNAP25, VAMP2 or STXBP1, suggesting that it interacts with syntaxins that do not form the SNARE complex.

Functionally, may be involved in intracellular vesicle traffic and potentially in calcium-dependent exocytosis in neuroendocrine cells. This Mus musculus (Mouse) protein is Alpha-taxilin (Txlna).